The chain runs to 405 residues: Phosphoglycerate kinase (405 aa).

Substrate is bound by residues 24–26 (DFN), Arg40, 63–66 (HLGR), Arg122, and Arg162. Residues Lys212, Glu331, and 361-364 (GGDS) each bind ATP.

It belongs to the phosphoglycerate kinase family. As to quaternary structure, monomer.

The protein resides in the cytoplasm. The catalysed reaction is (2R)-3-phosphoglycerate + ATP = (2R)-3-phospho-glyceroyl phosphate + ADP. Its pathway is carbohydrate degradation; glycolysis; pyruvate from D-glyceraldehyde 3-phosphate: step 2/5. The protein is Phosphoglycerate kinase of Corynebacterium glutamicum (strain R).